Consider the following 201-residue polypeptide: UPF0637 protein LCA_0842 (201 aa).

It belongs to the UPF0637 family.

This Latilactobacillus sakei subsp. sakei (strain 23K) (Lactobacillus sakei subsp. sakei) protein is UPF0637 protein LCA_0842.